We begin with the raw amino-acid sequence, 701 residues long: Interleukin-1 receptor accessory protein-like 1-A (701 aa).

An N-terminal signal peptide occupies residues 1–19 (MTALNPVLFLLCGVSVSLS). The Extracellular portion of the chain corresponds to 20-361 (LKVVSKRGSV…IGKRVELMYT (342 aa)). An Ig-like C2-type 1 domain is found at 33–133 (TDWSVDYLKY…RNSTFCMKVS (101 aa)). A disulfide bridge connects residues cysteine 54 and cysteine 121. 6 N-linked (GlcNAc...) asparagine glycosylation sites follow: asparagine 64, asparagine 125, asparagine 141, asparagine 216, asparagine 267, and asparagine 334. Ig-like C2-type domains follow at residues 146–235 (CYNS…TYLS) and 245–353 (PRIL…VQIG). An intrachain disulfide couples cysteine 167 to cysteine 219. Cysteine 270 and cysteine 337 are oxidised to a cystine. A helical transmembrane segment spans residues 362–382 (VELAGGLGAILLLLALLLSVY). Residues 383–701 (KCYRIELLLC…RETSISSVIW (319 aa)) lie on the Cytoplasmic side of the membrane. The TIR domain maps to 407–563 (KEYDAYLSYS…RFWKQLRYTM (157 aa)). Glutamate 495 is a catalytic residue. The interval 568-701 (PQQTITNHAL…RETSISSVIW (134 aa)) is required for synaptic vesicle accumulation during synaptogenesis.

This sequence belongs to the interleukin-1 receptor family.

Its subcellular location is the cell membrane. It localises to the cytoplasm. It catalyses the reaction NAD(+) + H2O = ADP-D-ribose + nicotinamide + H(+). Functionally, may regulate secretion and presynaptic differentiation through inhibition of the activity of N-type voltage-gated calcium channel. During presynaptic differentiation may regulate both synaptic vesicle accumulation in axon terminals and subsequent axon terminal remodeling. In Danio rerio (Zebrafish), this protein is Interleukin-1 receptor accessory protein-like 1-A (il1rapl1a).